Here is a 138-residue protein sequence, read N- to C-terminus: Thyrotropin subunit beta (138 aa).

A signal peptide spans 1-20 (MSAAVLLSVLFALACGQAAS). 6 disulfide bridges follow: Cys-22–Cys-72, Cys-36–Cys-87, Cys-39–Cys-125, Cys-47–Cys-103, Cys-51–Cys-105, and Cys-108–Cys-115. Asn-43 is a glycosylation site (N-linked (GlcNAc...) asparagine). A propeptide spanning residues 133–138 (LGGFSV) is cleaved from the precursor.

Belongs to the glycoprotein hormones subunit beta family. Heterodimer of a common alpha chain and a unique beta chain which confers biological specificity to thyrotropin, lutropin, follitropin and gonadotropin.

The protein localises to the secreted. Its function is as follows. Indispensable for the control of thyroid structure and metabolism. The protein is Thyrotropin subunit beta (Tshb) of Mus musculus (Mouse).